The primary structure comprises 128 residues: Large ribosomal subunit protein bL17 (128 aa).

Belongs to the bacterial ribosomal protein bL17 family. As to quaternary structure, part of the 50S ribosomal subunit. Contacts protein L32.

The protein is Large ribosomal subunit protein bL17 of Pseudomonas syringae pv. tomato (strain ATCC BAA-871 / DC3000).